Consider the following 322-residue polypeptide: Phosphatidylserine decarboxylase proenzyme (322 aa).

Active-site charge relay system; for autoendoproteolytic cleavage activity residues include aspartate 90, histidine 147, and serine 254. Serine 254 acts as the Schiff-base intermediate with substrate; via pyruvic acid; for decarboxylase activity in catalysis. Pyruvic acid (Ser); by autocatalysis is present on serine 254. Residues 293–322 (PDAEPAPLPAEEIEAEHDASPLVDDKKDQV) are disordered. Basic and acidic residues predominate over residues 308–322 (EHDASPLVDDKKDQV).

It belongs to the phosphatidylserine decarboxylase family. PSD-B subfamily. Prokaryotic type I sub-subfamily. As to quaternary structure, heterodimer of a large membrane-associated beta subunit and a small pyruvoyl-containing alpha subunit. Pyruvate is required as a cofactor. Is synthesized initially as an inactive proenzyme. Formation of the active enzyme involves a self-maturation process in which the active site pyruvoyl group is generated from an internal serine residue via an autocatalytic post-translational modification. Two non-identical subunits are generated from the proenzyme in this reaction, and the pyruvate is formed at the N-terminus of the alpha chain, which is derived from the carboxyl end of the proenzyme. The autoendoproteolytic cleavage occurs by a canonical serine protease mechanism, in which the side chain hydroxyl group of the serine supplies its oxygen atom to form the C-terminus of the beta chain, while the remainder of the serine residue undergoes an oxidative deamination to produce ammonia and the pyruvoyl prosthetic group on the alpha chain. During this reaction, the Ser that is part of the protease active site of the proenzyme becomes the pyruvoyl prosthetic group, which constitutes an essential element of the active site of the mature decarboxylase.

It is found in the cell membrane. The catalysed reaction is a 1,2-diacyl-sn-glycero-3-phospho-L-serine + H(+) = a 1,2-diacyl-sn-glycero-3-phosphoethanolamine + CO2. Its pathway is phospholipid metabolism; phosphatidylethanolamine biosynthesis; phosphatidylethanolamine from CDP-diacylglycerol: step 2/2. Functionally, catalyzes the formation of phosphatidylethanolamine (PtdEtn) from phosphatidylserine (PtdSer). In Escherichia coli O45:K1 (strain S88 / ExPEC), this protein is Phosphatidylserine decarboxylase proenzyme.